Consider the following 278-residue polypeptide: MSSPPASTDHRLVGSTTGAPDTPSAAATPLPQTLWSLQVPLHITHASKSTAPFIVSVPRFSYLALLLPRLTAYYGLPCSSFHHEEIQLRNLAVGLLVDLYQPATLPWRLVVGDGPEWDIADTFTNSAKEADFVRNGNAKQIMSLSKEHSTALWNAVQDNDHVSFGKVNRRLLNTPSPFKNVPIRIYIPSSPNDTGDATPGSFKVVQNLVSPRLPNRAPQTLGAALKSMLPTLFPSSRDPVLANVILHGGPVPFRAPLEELMREAAYPDGWLCLCVVLL.

Residues 1-25 form a disordered region; it reads MSSPPASTDHRLVGSTTGAPDTPSA. Lys-128 participates in a covalent cross-link: Glycyl lysine isopeptide (Lys-Gly) (interchain with G-Cter in ATG12).

Belongs to the ATG5 family. As to quaternary structure, conjugated with ATG12. In terms of processing, conjugated to ATG12; which is essential for autophagy.

The protein resides in the preautophagosomal structure membrane. Involved in cytoplasm to vacuole transport (Cvt) and autophagic vesicle formation. Autophagy is essential for maintenance of amino acid levels and protein synthesis under nitrogen starvation. Required for selective autophagic degradation of the nucleus (nucleophagy). Also required for mitophagy, which eliminates defective or superfluous mitochondria in order to fulfill cellular energy requirements and prevent excess ROS production. Conjugation with ATG12, through a ubiquitin-like conjugating system involving ATG7 as an E1-like activating enzyme and ATG10 as an E2-like conjugating enzyme, is essential for its function. The ATG12-ATG5 conjugate acts as an E3-like enzyme which is required for lipidation of ATG8 and ATG8 association to the vesicle membranes. The sequence is that of Autophagy protein 5 (ATG5) from Chaetomium globosum (strain ATCC 6205 / CBS 148.51 / DSM 1962 / NBRC 6347 / NRRL 1970) (Soil fungus).